The chain runs to 408 residues: Diguanylate cyclase DgcN (408 aa).

Residues 1 to 24 (MMDNDNSLNKRPTFKRALRNISMT) lie on the Cytoplasmic side of the membrane. A helical transmembrane segment spans residues 25-45 (SIFITMMLIWLLLSVTSVLTL). Over 46 to 52 (KQYAQKN) the chain is Periplasmic. Residues 53-73 (LALTAATMTYSLEAAVVFADG) traverse the membrane as a helical segment. The Cytoplasmic segment spans residues 74–112 (PAATETLAALGQQGQFSTAEVRDKQQNILASWHYTRKDP). The helical transmembrane segment at 113–133 (GDTFSNFISHWLFPAPIIQPI) threads the bilayer. At 134–154 (RHNGETIGEVRLTARDSSISH) the chain is on the periplasmic side. The chain crosses the membrane as a helical span at residues 155–175 (FIWFSLAVLTGCILLASGIAI). The Cytoplasmic portion of the chain corresponds to 176 to 408 (TLTRHLHNGL…KHQRAEKLVR (233 aa)). Residues 183 to 236 (NGLVEALKNITDVVHDVRSNRNFSRRVSEERIAEFHRFALDFNSLLDEMEEWQL) enclose the HAMP domain. Positions 278–408 (KTSALLFLDG…KHQRAEKLVR (131 aa)) constitute a GGDEF domain. A Mg(2+)-binding site is contributed by Asp286. Asn294, His299, and Asp303 together coordinate substrate. Asp329 contacts Mg(2+). Asp329 serves as the catalytic Proton acceptor.

Homodimer. Interacts with the cell division proteins FtsZ and ZipA. The cofactor is Mg(2+).

It is found in the cell inner membrane. It catalyses the reaction 2 GTP = 3',3'-c-di-GMP + 2 diphosphate. It participates in purine metabolism; 3',5'-cyclic di-GMP biosynthesis. With respect to regulation, inhibited by YfiR, which prevents relocation to the midcell. A reductive stress signal is required to inactivate YfiR and turn on the DGC activity of DgcN. Functionally, bifunctional protein that catalyzes the synthesis of cyclic-di-GMP (c-di-GMP) in response to reductive stress and then dynamically relocates to the division site to arrest cell division in response to envelope stress. In the presence of high intracellular c-di-GMP levels, and in response to envelope stress, interacts with cell division proteins and halts cell division, without disassembling the Z ring, but by blocking its further progress toward cytokinesis. Part of a network that regulates cell motility by altering levels of c-di-GMP. This chain is Diguanylate cyclase DgcN, found in Escherichia coli (strain K12).